The sequence spans 300 residues: Mitochondrial tricarboxylate transporter 1 (300 aa).

Solcar repeat units follow at residues 8 to 98 (VSPS…FRSM), 107 to 197 (LSNS…LRDW), and 209 to 294 (INWL…VVWL). A run of 6 helical transmembrane segments spans residues 11 to 31 (SVSV…TFPI), 67 to 87 (PKGL…KAGV), 114 to 134 (LAGM…SETI), 172 to 191 (GVVP…LGTY), 208 to 228 (LINW…AVYG), and 277 to 297 (LIVS…LLAG).

It belongs to the mitochondrial carrier (TC 2.A.29) family.

The protein resides in the mitochondrion membrane. Functionally, mitochondrial tricarboxylate transporter; part of the gene cluster that mediates the biosynthesis of itaconic acid and 2-hydroxyparaconate. Cis-aconitate is secreted by the mitochondrial tricarboxylate transporter MTT1. In the cytosol cis-aconitate is converted into trans-aconitate via isomerization by the aconitate-delta-isomerase ADI1. Decarboxylation of trans-aconitate by the trans-aconitate decarboxylase TAD1 then leads then to the production of itaconic acid. The cytochrome P450 monooxygenase CYP3 further converts itaconate to 2-hydroxyparaconate via oxidation of the double bond, leading to a transient epoxide, which can subsequently be lactonized to produce 2-hydroxyparaconate. Secretion of itaconate and possibly 2-hydroxyparaconate into the medium is mediated by the major facilitator ITP1. The glyoxalase domain-containing protein RDO1 is not involved in the biosynthesis of itaconate and 2-hydroxyparaconate, however, it might play a role in the further conversion of 2-hydroxyparaconate to itatartarate. This Mycosarcoma maydis (Corn smut fungus) protein is Mitochondrial tricarboxylate transporter 1.